The chain runs to 1091 residues: Voltage-dependent calcium channel subunit alpha-2/delta-1 (1091 aa).

The first 24 residues, 1–24 (MAAGCLLALTLTLFQSWLIGPSSE), serve as a signal peptide directing secretion. The Extracellular portion of the chain corresponds to 25-1061 (EPFPSPVTIK…VLEDYTDCGG (1037 aa)). A glycan (N-linked (GlcNAc...) asparagine) is linked at N92. S119 carries the phosphoserine modification. 2 N-linked (GlcNAc...) asparagine glycosylation sites follow: N136 and N184. The region spanning 252–429 (DMLILVDVSG…INTQEYLDVL (178 aa)) is the VWFA domain. A divalent metal cation is bound by residues D258, S260, and S262. The MIDAS-like motif motif lies at 258–262 (DVSGS). 2 N-linked (GlcNAc...) asparagine glycosylation sites follow: N323 and N347. C403 and C1047 are joined by a disulfide. The 92-residue stretch at 445–536 (WTNVYLDALE…QPKNPKSQEP (92 aa)) folds into the Cache domain. N-linked (GlcNAc...) asparagine glycans are attached at residues N593, N769, N876, and N973. Residues 1062–1082 (VSGLNPSLWSIFGLQFILLWL) traverse the membrane as a helical segment. The Cytoplasmic segment spans residues 1083-1091 (VSGSRHYLW).

The protein belongs to the calcium channel subunit alpha-2/delta family. In terms of assembly, dimer formed of alpha-2-1 and delta-1 chains; disulfide-linked. Voltage-dependent calcium channels are multisubunit complexes, consisting of alpha-1 (CACNA1), alpha-2 (CACNA2D), beta (CACNB) and delta (CACNA2D) subunits in a 1:1:1:1 ratio. Proteolytically processed into subunits alpha-2-1 and delta-1 that are disulfide-linked.

Its subcellular location is the membrane. The protein resides in the cell membrane. Its function is as follows. The alpha-2/delta subunit of voltage-dependent calcium channels regulates calcium current density and activation/inactivation kinetics of the calcium channel. Plays an important role in excitation-contraction coupling. This chain is Voltage-dependent calcium channel subunit alpha-2/delta-1 (Cacna2d1), found in Rattus norvegicus (Rat).